The following is a 463-amino-acid chain: Elongation factor 1-alpha 2 (463 aa).

The residue at position 2 (Gly-2) is a N,N,N-trimethylglycine. In terms of domain architecture, tr-type G spans 5–242 (KTHINIVVIG…DTILPPTRPT (238 aa)). The segment at 14-21 (GHVDSGKS) is G1. Asp-17, Ser-18, Gly-19, Lys-20, Ser-21, and Thr-22 together coordinate GTP. Mg(2+) is bound at residue Asp-17. Position 36 is an N6,N6,N6-trimethyllysine; alternate (Lys-36). Lys-36 is subject to N6,N6-dimethyllysine; alternate. Lys-36 is modified (N6-methyllysine; alternate). An N6,N6,N6-trimethyllysine modification is found at Lys-55. Position 55 is an N6,N6-dimethyllysine (Lys-55). Residues 70 to 74 (GITID) form a G2 region. Lys-79 carries the N6,N6,N6-trimethyllysine modification. Positions 91-94 (DAPG) are G3. GTP-binding residues include Asn-153, Lys-154, and Asp-156. The segment at 153 to 156 (NKMD) is G4. A Phosphoserine modification is found at Ser-163. Lys-165 carries the post-translational modification N6,N6-dimethyllysine; alternate. Lys-165 is modified (N6-methyllysine; alternate). Lys-165 bears the N6,N6,N6-trimethyllysine; alternate; by EEF1AKMT3 mark. An N6-acetyllysine modification is found at Lys-179. The GTP site is built by Ser-194, Gly-195, and Trp-196. The tract at residues 194 to 196 (SGW) is G5. The residue at position 224 (Ser-224) is a Phosphoserine. At Thr-239 the chain carries Phosphothreonine. Residues Glu-301 and Glu-374 each carry the 5-glutamyl glycerylphosphorylethanolamine modification. Residue Lys-439 is modified to N6-acetyllysine. The segment at 444 to 463 (KSGGAGKVTKSAQKAQKAGK) is disordered.

Belongs to the TRAFAC class translation factor GTPase superfamily. Classic translation factor GTPase family. EF-Tu/EF-1A subfamily. In terms of assembly, homodimer; arranged in a 'head to tail' dimer configuration. Trimethylated at Lys-165 by EEF1AKMT3. Mono-, di-, and trimethylated at Lys-36 by EEF1AKMT4; trimethylated form is predominant. Methylation by EEF1AKMT4 contributes to the fine-tuning of translation rates for a subset of tRNAs. Trimethylated at the N-terminus and dimethylated at Lys-55 by METTL13.

Its subcellular location is the endoplasmic reticulum membrane. It catalyses the reaction GTP + H2O = GDP + phosphate + H(+). Translation elongation factor that catalyzes the GTP-dependent binding of aminoacyl-tRNA (aa-tRNA) to the A-site of ribosomes during the elongation phase of protein synthesis. Base pairing between the mRNA codon and the aa-tRNA anticodon promotes GTP hydrolysis, releasing the aa-tRNA from EEF1A1 and allowing its accommodation into the ribosome. The growing protein chain is subsequently transferred from the P-site peptidyl tRNA to the A-site aa-tRNA, extending it by one amino acid through ribosome-catalyzed peptide bond formation. This is Elongation factor 1-alpha 2 (Eef1a2) from Rattus norvegicus (Rat).